The primary structure comprises 370 residues: DNA replication and repair protein RecF (370 aa).

An ATP-binding site is contributed by 30–37; that stretch reads GENAQGKT.

Belongs to the RecF family. As to quaternary structure, recruited to foci following DNA damage; probably interacts with RecO.

Its subcellular location is the cytoplasm. The protein localises to the nucleoid. Functionally, the RecF protein is involved in DNA metabolism; it is required for DNA replication and normal SOS inducibility. RecF binds preferentially to single-stranded, linear DNA. It also seems to bind ATP. Is recruited to repair centers, foci that are the site of double-strand DNA break(s) after RecN and RecO; recruitment may depend on RecO. A positive modulator of RecA. The sequence is that of DNA replication and repair protein RecF from Bacillus subtilis (strain 168).